Here is a 447-residue protein sequence, read N- to C-terminus: Argininosuccinate synthase (447 aa).

Residues 17 to 25 and A43 contribute to the ATP site; that span reads AFSGGLDTS. Y99 is an L-citrulline binding site. The ATP site is built by G129 and T131. 3 residues coordinate L-aspartate: T131, N135, and D136. N135 is a binding site for L-citrulline. D136 provides a ligand contact to ATP. L-citrulline is bound by residues R139 and S192. D194 is a binding site for ATP. L-citrulline-binding residues include T201, E203, and E280.

This sequence belongs to the argininosuccinate synthase family. Type 2 subfamily. Homotetramer.

The protein resides in the cytoplasm. It carries out the reaction L-citrulline + L-aspartate + ATP = 2-(N(omega)-L-arginino)succinate + AMP + diphosphate + H(+). It functions in the pathway amino-acid biosynthesis; L-arginine biosynthesis; L-arginine from L-ornithine and carbamoyl phosphate: step 2/3. The protein is Argininosuccinate synthase of Shigella dysenteriae serotype 1 (strain Sd197).